The sequence spans 147 residues: Myoglobin (147 aa).

In terms of domain architecture, Globin spans 2–141; the sequence is HDAELVLKCW…VIGDIDTYYK (140 aa). H60 provides a ligand contact to nitrite. O2 is bound at residue H60. Heme b is bound at residue H89.

Belongs to the globin family. Monomeric.

It is found in the cytoplasm. The protein resides in the sarcoplasm. It catalyses the reaction Fe(III)-heme b-[protein] + nitric oxide + H2O = Fe(II)-heme b-[protein] + nitrite + 2 H(+). It carries out the reaction H2O2 + AH2 = A + 2 H2O. Functionally, monomeric heme protein which primary function is to store oxygen and facilitate its diffusion within muscle tissues. Reversibly binds oxygen through a pentacoordinated heme iron and enables its timely and efficient release as needed during periods of heightened demand. Depending on the oxidative conditions of tissues and cells, and in addition to its ability to bind oxygen, it also has a nitrite reductase activity whereby it regulates the production of bioactive nitric oxide. Under stress conditions, like hypoxia and anoxia, it also protects cells against reactive oxygen species thanks to its pseudoperoxidase activity. The chain is Myoglobin (mb) from Cyprinus carpio (Common carp).